A 129-amino-acid chain; its full sequence is Flagellar assembly factor FliW 2 (129 aa).

It belongs to the FliW family. Interacts with translational regulator CsrA and flagellin(s).

The protein localises to the cytoplasm. Its function is as follows. Acts as an anti-CsrA protein, binds CsrA and prevents it from repressing translation of its target genes, one of which is flagellin. Binds to flagellin and participates in the assembly of the flagellum. In Helicobacter pylori (strain J99 / ATCC 700824) (Campylobacter pylori J99), this protein is Flagellar assembly factor FliW 2.